We begin with the raw amino-acid sequence, 736 residues long: Microtubule-associated protein mu-2 (736 aa).

Belongs to the orthoreovirus mu-2 protein family. As to quaternary structure, interacts with protein mu-NS; in viral inclusions. Interacts with polymerase lambda-3; this interaction stimulates the ATPase activity of mu-2. It depends on a divalent metal cation as a cofactor.

It is found in the virion. The protein resides in the host cytoplasm. It localises to the host cytoskeleton. Functionally, minor inner capsid (core) component. Displays NTPase and RNA 5'-triphosphatase (RTPase) activities. ATP is the preferred substrate for hydrolysis. May function as a cofactor of polymerase lambda-3. Associates with microtubules and plays a role in the formation, structural organization and morphology of viral inclusions, where the assembly of cores and the replication of viral RNA occur. Together with mu-NS, recruits the other core proteins to these inclusions. The chain is Microtubule-associated protein mu-2 (M1) from Mammalia (T3D).